A 381-amino-acid chain; its full sequence is Probable tRNA sulfurtransferase (381 aa).

The THUMP domain maps to 55-163; the sequence is GECLENLNKV…DDEAFIYHEK (109 aa). Residues 181–182, Lys-265, Gly-287, and Gln-296 contribute to the ATP site; that span reads LV.

This sequence belongs to the ThiI family.

It is found in the cytoplasm. It carries out the reaction [ThiI sulfur-carrier protein]-S-sulfanyl-L-cysteine + a uridine in tRNA + 2 reduced [2Fe-2S]-[ferredoxin] + ATP + H(+) = [ThiI sulfur-carrier protein]-L-cysteine + a 4-thiouridine in tRNA + 2 oxidized [2Fe-2S]-[ferredoxin] + AMP + diphosphate. It catalyses the reaction [ThiS sulfur-carrier protein]-C-terminal Gly-Gly-AMP + S-sulfanyl-L-cysteinyl-[cysteine desulfurase] + AH2 = [ThiS sulfur-carrier protein]-C-terminal-Gly-aminoethanethioate + L-cysteinyl-[cysteine desulfurase] + A + AMP + 2 H(+). Its pathway is cofactor biosynthesis; thiamine diphosphate biosynthesis. Catalyzes the ATP-dependent transfer of a sulfur to tRNA to produce 4-thiouridine in position 8 of tRNAs, which functions as a near-UV photosensor. Also catalyzes the transfer of sulfur to the sulfur carrier protein ThiS, forming ThiS-thiocarboxylate. This is a step in the synthesis of thiazole, in the thiamine biosynthesis pathway. The sulfur is donated as persulfide by IscS. The polypeptide is Probable tRNA sulfurtransferase (Methanobrevibacter smithii (strain ATCC 35061 / DSM 861 / OCM 144 / PS)).